The chain runs to 286 residues: NFU1 iron-sulfur cluster scaffold homolog, mitochondrial (286 aa).

The transit peptide at 1 to 66 (MSKLLTNTAL…RQIQLSGARN (66 aa)) directs the protein to the mitochondrion. The tract at residues 182 to 250 (IKELLDTRIR…IPEVESVEQV (69 aa)) is nifU. The [4Fe-4S] cluster site is built by cysteine 219 and cysteine 222.

This sequence belongs to the NifU family.

The protein resides in the mitochondrion. Its function is as follows. Molecular scaffold for [Fe-S] cluster assembly of mitochondrial iron-sulfur proteins. This chain is NFU1 iron-sulfur cluster scaffold homolog, mitochondrial, found in Drosophila ananassae (Fruit fly).